The primary structure comprises 119 residues: uncharacterized protein (119 aa).

The protein resides in the mitochondrion. This is an uncharacterized protein from Arabidopsis thaliana (Mouse-ear cress).